The chain runs to 429 residues: Phosphoribosylamine--glycine ligase (429 aa).

The 208-residue stretch at 109–316 folds into the ATP-grasp domain; that stretch reads KDFLARHNIP…LVELCQAAIA (208 aa). 135 to 196 is a binding site for ATP; it reads VREKGAPIVV…EEFLDGEEAS (62 aa). 2 residues coordinate Mg(2+): Glu286 and Asn288.

The protein belongs to the GARS family. The cofactor is Mg(2+). Mn(2+) is required as a cofactor.

The enzyme catalyses 5-phospho-beta-D-ribosylamine + glycine + ATP = N(1)-(5-phospho-beta-D-ribosyl)glycinamide + ADP + phosphate + H(+). The protein operates within purine metabolism; IMP biosynthesis via de novo pathway; N(1)-(5-phospho-D-ribosyl)glycinamide from 5-phospho-alpha-D-ribose 1-diphosphate: step 2/2. The polypeptide is Phosphoribosylamine--glycine ligase (Vibrio cholerae serotype O1 (strain ATCC 39315 / El Tor Inaba N16961)).